The primary structure comprises 184 residues: Class II hydrophobin 6 (184 aa).

Residues 1–16 (MNFMLLSAALASMAVA) form the signal peptide. 4 cysteine pairs are disulfide-bonded: C122-C169, C130-C160, C131-C143, and C170-C181.

The protein belongs to the cerato-ulmin hydrophobin family. Homotetramer. Further self-assembles to form highly ordered films at water-air interfaces through intermolecular interactions. In terms of tissue distribution, expressed in the mycellium.

The protein localises to the secreted. Aerial growth, conidiation, and dispersal of filamentous fungi in the environment rely upon a capability of their secreting small amphipathic proteins called hydrophobins (HPBs) with low sequence identity. Class I can self-assemble into an outermost layer of rodlet bundles on aerial cell surfaces, conferring cellular hydrophobicity that supports fungal growth, development and dispersal; whereas Class II form highly ordered films at water-air interfaces through intermolecular interactions but contribute nothing to the rodlet structure. Hcf-6 is a class II hydrophobin that is involved in adhesion and in tomato plants infection. Is secreted to form a coat both around and beneath the fungus. The polypeptide is Class II hydrophobin 6 (Passalora fulva (Tomato leaf mold)).